A 233-amino-acid polypeptide reads, in one-letter code: Large ribosomal subunit protein uL2 (233 aa).

A disordered region spans residues 194–233; it reads HPHGGGNHQHVGRPSTVGRGTPPGRKVGRLSPKRRKKYGR. The span at 219-233 shows a compositional bias: basic residues; sequence KVGRLSPKRRKKYGR.

This sequence belongs to the universal ribosomal protein uL2 family. As to quaternary structure, part of the 50S ribosomal subunit. Forms a bridge to the 30S subunit in the 70S ribosome.

Functionally, one of the primary rRNA binding proteins. Required for association of the 30S and 50S subunits to form the 70S ribosome, for tRNA binding and peptide bond formation. It has been suggested to have peptidyltransferase activity; this is somewhat controversial. Makes several contacts with the 16S rRNA in the 70S ribosome. This is Large ribosomal subunit protein uL2 from Picrophilus torridus (strain ATCC 700027 / DSM 9790 / JCM 10055 / NBRC 100828 / KAW 2/3).